The chain runs to 432 residues: Phosphomethylpyrimidine synthase (432 aa).

Substrate is bound by residues asparagine 66, methionine 95, tyrosine 124, histidine 163, 185 to 187 (SRG), 226 to 229 (DGLR), and glutamate 265. Histidine 269 is a binding site for Zn(2+). Tyrosine 292 lines the substrate pocket. Histidine 333 contacts Zn(2+). Residues cysteine 409, cysteine 412, and cysteine 416 each contribute to the [4Fe-4S] cluster site.

Belongs to the ThiC family. It depends on [4Fe-4S] cluster as a cofactor.

The enzyme catalyses 5-amino-1-(5-phospho-beta-D-ribosyl)imidazole + S-adenosyl-L-methionine = 4-amino-2-methyl-5-(phosphooxymethyl)pyrimidine + CO + 5'-deoxyadenosine + formate + L-methionine + 3 H(+). It functions in the pathway cofactor biosynthesis; thiamine diphosphate biosynthesis. Its function is as follows. Catalyzes the synthesis of the hydroxymethylpyrimidine phosphate (HMP-P) moiety of thiamine from aminoimidazole ribotide (AIR) in a radical S-adenosyl-L-methionine (SAM)-dependent reaction. This Moorella thermoacetica (strain ATCC 39073 / JCM 9320) protein is Phosphomethylpyrimidine synthase.